The sequence spans 126 residues: UPF0738 protein BH2850 (126 aa).

Belongs to the UPF0738 family.

The chain is UPF0738 protein BH2850 from Halalkalibacterium halodurans (strain ATCC BAA-125 / DSM 18197 / FERM 7344 / JCM 9153 / C-125) (Bacillus halodurans).